Consider the following 495-residue polypeptide: MSMLVVFLLLWGVTWGPVTEAAIFYETQPSLWAESESLLKPLANVTLTCQAHLETPDFQLFKNGVAQEPVHLDSPAIKHQFLLTGDTQGRYRCRSGLSTGWTQLSKLLELTGPKSLPAPWLSMAPVSWITPGLKTTAVCRGVLRGVTFLLRREGDHEFLEVPEAQEDVEATFPVHQPGNYSCSYRTDGEGALSEPSATVTIEELAAPPPPVLMHHGESSQVLHPGNKVTLTCVAPLSGVDFQLRRGEKELLVPRSSTSPDRIFFHLNAVALGDGGHYTCRYRLHDNQNGWSGDSAPVELILSDETLPAPEFSPEPESGRALRLRCLAPLEGARFALVREDRGGRRVHRFQSPAGTEALFELHNISVADSANYSCVYVDLKPPFGGSAPSERLELHVDGPPPRPQLRATWSGAVLAGRDAVLRCEGPIPDVTFELLREGETKAVKTVRTPGAAANLELIFVGPQHAGNYRCRYRSWVPHTFESELSDPVELLVAES.

The first 21 residues, 1–21 (MSMLVVFLLLWGVTWGPVTEA), serve as a signal peptide directing secretion. Ig-like V-type domains are found at residues 22-113 (AIFY…LTGP), 114-206 (KSLP…ELAA), 207-299 (PPPP…PVEL), 300-397 (ILSD…LHVD), and 398-495 (GPPP…VAES). Asn-44 carries an N-linked (GlcNAc...) (complex) asparagine glycan. Cystine bridges form between Cys-49/Cys-93, Cys-139/Cys-182, Cys-232/Cys-279, Cys-325/Cys-374, and Cys-423/Cys-470. Residue Asn-179 is glycosylated (N-linked (GlcNAc...) asparagine). 2 N-linked (GlcNAc...) asparagine glycosylation sites follow: Asn-363 and Asn-371.

As to quaternary structure, interacts with CRISP3. Plasma.

The protein localises to the secreted. The chain is Alpha-1B-glycoprotein (A1BG) from Homo sapiens (Human).